A 182-amino-acid chain; its full sequence is Putative lipoprotein LpqE (182 aa).

Residues 1–29 form the signal peptide; sequence MNRCNIRLRLAGMTTWVASIALLAAALSG. A lipid anchor (N-palmitoyl cysteine) is attached at cysteine 30. A lipid anchor (S-diacylglycerol cysteine) is attached at cysteine 30.

The protein localises to the cell membrane. This is Putative lipoprotein LpqE (lpqE) from Mycobacterium bovis (strain ATCC BAA-935 / AF2122/97).